The primary structure comprises 396 residues: uncharacterized protein (396 aa).

A run of 12 helical transmembrane segments spans residues Thr-8–Ser-28, Ile-44–Val-64, Pro-73–Pro-93, Leu-97–Tyr-117, Val-133–Leu-153, Met-158–Leu-178, Ala-213–Pro-233, Leu-250–Asn-270, Val-276–Val-296, Ile-304–Met-324, Ile-338–Ala-358, and Ile-363–Phe-383.

It belongs to the major facilitator superfamily.

The protein localises to the cell membrane. This is an uncharacterized protein from Bacillus subtilis (strain 168).